Here is a 298-residue protein sequence, read N- to C-terminus: NADH-cytochrome b5 reductase 2 (298 aa).

A helical transmembrane segment spans residues phenylalanine 13–tryptophan 33. The FAD-binding FR-type domain occupies arginine 48–lysine 152. Serine 155 to leucine 190 serves as a coordination point for FAD.

This sequence belongs to the flavoprotein pyridine nucleotide cytochrome reductase family. The cofactor is FAD.

It localises to the mitochondrion outer membrane. It catalyses the reaction 2 Fe(III)-[cytochrome b5] + NADH = 2 Fe(II)-[cytochrome b5] + NAD(+) + H(+). Functionally, may mediate the reduction of outer membrane cytochrome b5. The protein is NADH-cytochrome b5 reductase 2 (MCR1) of Candida glabrata (strain ATCC 2001 / BCRC 20586 / JCM 3761 / NBRC 0622 / NRRL Y-65 / CBS 138) (Yeast).